Consider the following 328-residue polypeptide: Putative P2Y purinoceptor 10 (328 aa).

The Extracellular segment spans residues 1-27 (MGSNSTSSAESNCNATYLPFQYSLYAT). N-linked (GlcNAc...) asparagine glycosylation is found at N4 and N14. Residues 28–48 (TYIFIFIPGLLANSAALWVLC) form a helical membrane-spanning segment. Residues 49–56 (RFISKKNK) lie on the Cytoplasmic side of the membrane. Residues 57-77 (AIIFMINLSVADLAHILSLPL) form a helical membrane-spanning segment. The Extracellular segment spans residues 78 to 91 (RIYYYINRHWPFQR). A helical membrane pass occupies residues 92–112 (ALCLLCFYLKYLNMYASIFFL). A disulfide bond links C94 and C170. Topologically, residues 113-137 (TCISLQRCLFLLKPFRARNWKRRYD) are cytoplasmic. Residues 138 to 158 (VGISAVIWIVVGTACLPFPIL) form a helical membrane-spanning segment. The Extracellular segment spans residues 159–182 (RNAGLANSTDSCFADLGYKQMDAV). The chain crosses the membrane as a helical span at residues 183 to 203 (VLVTMVVIAELAGFVIPVITI). The Cytoplasmic portion of the chain corresponds to 204-233 (ACCTWKTTVSLKHPPIAFQGISERKKALRM). Residues 234 to 254 (VFMCAAVFVICFTPYHINFIF) traverse the membrane as a helical segment. Residues 255 to 277 (YTMVKESIITSCPTVKSTLYFHP) are Extracellular-facing. The helical transmembrane segment at 278-298 (FSLCLASLCCLLDPILYYFMA) threads the bilayer. Residues 299–328 (SEFRDQLSRHGSSVTRSRLMSRESGSSMVN) are Cytoplasmic-facing.

This sequence belongs to the G-protein coupled receptor 1 family.

Its subcellular location is the cell membrane. Putative receptor for purines coupled to G-proteins. In Mus musculus (Mouse), this protein is Putative P2Y purinoceptor 10 (P2ry10).